The following is a 469-amino-acid chain: Protein RdxA (469 aa).

At 1–23 (MSEPLYAPRTPIFPRQISGAFRT) the chain is on the cytoplasmic side. Residues 24 to 44 (AKWWILAVSLGIYLLTPWLRW) form a helical membrane-spanning segment. The Periplasmic portion of the chain corresponds to 45–75 (DRGPNLPDQAVLIDIAGRRFFLFGIQIWPHE). The helical transmembrane segment at 76–96 (FYFVAGLLIMAGLGLFLFTSA) threads the bilayer. Residues 97–149 (AGRVWCGYACPQTVWTDLFLLVERRIEGDRNAQIRLHRQAWTAEKVWKRLLKW) are Cytoplasmic-facing. A helical membrane pass occupies residues 150–170 (SVWAAISLLTGGAWVFYFADA). The Periplasmic segment spans residues 171–183 (PTLLNGLVTLTAH). Residues 184–204 (PVAWITIFVLTATTFVFAGFM) traverse the membrane as a helical segment. Topologically, residues 205–327 (REQICIYACP…PAWRRLFRLR (123 aa)) are cytoplasmic. 4Fe-4S ferredoxin-type domains follow at residues 242 to 270 (KRSETGRGDCIDCMACVNVCPMGIDIREG) and 266 to 295 (DIREGQQMACITCGLCIDACDDTMDRIGRP). [4Fe-4S] cluster contacts are provided by Cys-251, Cys-254, Cys-257, Cys-261, Cys-275, Cys-278, Cys-281, and Cys-285. A helical transmembrane segment spans residues 328-348 (TSLYAVLWAGVGVTLIAALLL). The Periplasmic segment spans residues 349–469 (RPAVDLAVTP…VKAAFHGARS (121 aa)).

The protein localises to the cell membrane. Functionally, predicted to be involved in a redox process. This Cereibacter sphaeroides (strain ATCC 17023 / DSM 158 / JCM 6121 / CCUG 31486 / LMG 2827 / NBRC 12203 / NCIMB 8253 / ATH 2.4.1.) (Rhodobacter sphaeroides) protein is Protein RdxA (rdxA).